Here is a 637-residue protein sequence, read N- to C-terminus: Probable membrane transporter protein MamO (637 aa).

The Cytoplasmic segment spans residues 1-24 (MIEVGETMGELPTNKIVFCERSWK). A helical membrane pass occupies residues 25–45 (TPVSILAFLIFVTFAWGIYLL). The Lumenal segment spans residues 46–352 (DHYDEDDNFH…AKIGGYSVAD (307 aa)). Residues 78–268 (LYHTVPPAVV…VIVSHLQDVV (191 aa)) form a protease-like region. Histidine 148 and histidine 263 together coordinate a divalent metal cation. Residues 353–373 (IVGLVMLALAAGVTGGMMTMG) traverse the membrane as a helical segment. The segment at 370–637 (MTMGGGVLQV…AIALKMLTSV (268 aa)) is TSUP-like. Residues 374–378 (GGVLQ) are Cytoplasmic-facing. Residues 379–399 (VAGMMVFFGYGMYLIRPVVFL) traverse the membrane as a helical segment. The Lumenal portion of the chain corresponds to 400–416 (TNVVVYGAASLRNDKAQ). Residues 417–437 (LVQWDKVKPLIPWGIAGVILG) traverse the membrane as a helical segment. Residue tyrosine 438 is a topological domain, cytoplasmic. A helical membrane pass occupies residues 439 to 459 (FIGNAIGDSVVGILLGLFALI). Over 460-517 (MAGKAVMEILQPNAGEETAESISATEAEDEMDELMALADGTSRPKASGLALPEGHARS) the chain is Lumenal. Residues 518–538 (AVLGLPMGLFSGILGISGGVI) form a helical membrane-spanning segment. Residues 539 to 554 (EVPLQRYVGRISLQNA) are Cytoplasmic-facing. Residues 555 to 575 (IANSSVLVFWASVAGSVVAFL) form a helical membrane-spanning segment. At 576-586 (HGSSTGLIHWE) the chain is on the lumenal side. A helical membrane pass occupies residues 587 to 607 (APVTLALVMIPGAYVGGIIGA). Residues 608 to 616 (RLMRVLPVR) are Cytoplasmic-facing. A helical transmembrane segment spans residues 617–637 (VLKGVYAATMAAIALKMLTSV).

In the N-terminal section; belongs to the peptidase S1C family. This sequence in the C-terminal section; belongs to the 4-toluene sulfonate uptake permease (TSUP) (TC 2.A.102) family. It depends on a metal cation as a cofactor. Post-translationally, subject to proteolytic cleavage by MamE.

The protein localises to the magnetosome membrane. Its function is as follows. Plays 2 roles; promotes magnetite nucleation/formation and activates the MamE protease. Despite its near conservation of a protease-like sequence, this is probably not a protease. Required in conjunction with MamP for proteolysis of at least MamE, itself and MamP. May transport a solute that controls MamE's protease activity. May place individual iron atoms into the magnetite lattice. The sequence is that of Probable membrane transporter protein MamO (mamO) from Paramagnetospirillum magneticum (strain ATCC 700264 / AMB-1) (Magnetospirillum magneticum).